A 146-amino-acid chain; its full sequence is Large-conductance mechanosensitive channel (146 aa).

The next 2 membrane-spanning stretches (helical) occupy residues 15-35 and 81-101; these read VSLA…TSLV and GIFI…FIII.

It belongs to the MscL family. Homopentamer.

It localises to the cell membrane. In terms of biological role, channel that opens in response to stretch forces in the membrane lipid bilayer. May participate in the regulation of osmotic pressure changes within the cell. This chain is Large-conductance mechanosensitive channel, found in Clostridium beijerinckii (strain ATCC 51743 / NCIMB 8052) (Clostridium acetobutylicum).